A 149-amino-acid polypeptide reads, in one-letter code: Large ribosomal subunit protein bL20m (149 aa).

Residues 1 to 9 constitute a mitochondrion transit peptide; the sequence is MVFLSLSRW.

It belongs to the bacterial ribosomal protein bL20 family. In terms of assembly, component of the mitochondrial ribosome large subunit (39S) which comprises a 16S rRNA and about 50 distinct proteins.

The protein resides in the mitochondrion. This Xenopus laevis (African clawed frog) protein is Large ribosomal subunit protein bL20m (mrpl20).